Reading from the N-terminus, the 339-residue chain is tRNA N6-adenosine threonylcarbamoyltransferase (339 aa).

Residues histidine 111 and histidine 115 each coordinate Fe cation. Substrate contacts are provided by residues 134–138 (LVSGG), aspartate 167, glycine 180, and asparagine 272. Aspartate 300 provides a ligand contact to Fe cation.

The protein belongs to the KAE1 / TsaD family. Fe(2+) serves as cofactor.

It is found in the cytoplasm. The enzyme catalyses L-threonylcarbamoyladenylate + adenosine(37) in tRNA = N(6)-L-threonylcarbamoyladenosine(37) in tRNA + AMP + H(+). In terms of biological role, required for the formation of a threonylcarbamoyl group on adenosine at position 37 (t(6)A37) in tRNAs that read codons beginning with adenine. Is involved in the transfer of the threonylcarbamoyl moiety of threonylcarbamoyl-AMP (TC-AMP) to the N6 group of A37, together with TsaE and TsaB. TsaD likely plays a direct catalytic role in this reaction. The chain is tRNA N6-adenosine threonylcarbamoyltransferase from Sodalis glossinidius (strain morsitans).